Here is a 371-residue protein sequence, read N- to C-terminus: 4-hydroxybutyrate dehydrogenase (371 aa).

NAD(+) contacts are provided by residues 88–92, 126–130, and Lys148; these read GSVID and TTCGT. Fe cation contacts are provided by Asp182, His186, His253, and His267. His267 lines the NAD(+) pocket.

The protein belongs to the iron-containing alcohol dehydrogenase family. As to quaternary structure, homodimer. Fe(2+) is required as a cofactor. The cofactor is Cu(2+).

It catalyses the reaction 4-hydroxybutanoate + NAD(+) = succinate semialdehyde + NADH + H(+). Inactivated by oxygen. Its function is as follows. Involved in the anaerobic succinate degradation pathway. Catalyzes the interconversion of gamma-hydroxybutyrate (GHB) and succinic semialdehyde (SSA). The protein is 4-hydroxybutyrate dehydrogenase of Clostridium kluyveri (strain ATCC 8527 / DSM 555 / NBRC 12016 / NCIMB 10680 / K1).